Here is a 485-residue protein sequence, read N- to C-terminus: tRNA sulfurtransferase (485 aa).

Residues 61 to 165 form the THUMP domain; it reads EELIALLQRI…DDKMMLVKTR (105 aa). ATP is bound by residues 183–184, Lys-265, Gly-287, and Gln-296; that span reads LI. Residues Cys-344 and Cys-456 are joined by a disulfide bond. A Rhodanese domain is found at 404 to 483; the sequence is LGENEVILDI…FSNVRVFAKN (80 aa). Cys-456 (cysteine persulfide intermediate) is an active-site residue.

This sequence belongs to the ThiI family.

The protein localises to the cytoplasm. The enzyme catalyses [ThiI sulfur-carrier protein]-S-sulfanyl-L-cysteine + a uridine in tRNA + 2 reduced [2Fe-2S]-[ferredoxin] + ATP + H(+) = [ThiI sulfur-carrier protein]-L-cysteine + a 4-thiouridine in tRNA + 2 oxidized [2Fe-2S]-[ferredoxin] + AMP + diphosphate. It carries out the reaction [ThiS sulfur-carrier protein]-C-terminal Gly-Gly-AMP + S-sulfanyl-L-cysteinyl-[cysteine desulfurase] + AH2 = [ThiS sulfur-carrier protein]-C-terminal-Gly-aminoethanethioate + L-cysteinyl-[cysteine desulfurase] + A + AMP + 2 H(+). Its pathway is cofactor biosynthesis; thiamine diphosphate biosynthesis. Catalyzes the ATP-dependent transfer of a sulfur to tRNA to produce 4-thiouridine in position 8 of tRNAs, which functions as a near-UV photosensor. Also catalyzes the transfer of sulfur to the sulfur carrier protein ThiS, forming ThiS-thiocarboxylate. This is a step in the synthesis of thiazole, in the thiamine biosynthesis pathway. The sulfur is donated as persulfide by IscS. The polypeptide is tRNA sulfurtransferase (Haemophilus influenzae (strain 86-028NP)).